The primary structure comprises 203 residues: ATP-dependent Clp protease proteolytic subunit 1 (203 aa).

Ser-101 acts as the Nucleophile in catalysis. Residue His-126 is part of the active site.

It belongs to the peptidase S14 family. Fourteen ClpP subunits assemble into 2 heptameric rings which stack back to back to give a disk-like structure with a central cavity, resembling the structure of eukaryotic proteasomes.

The protein localises to the cytoplasm. It carries out the reaction Hydrolysis of proteins to small peptides in the presence of ATP and magnesium. alpha-casein is the usual test substrate. In the absence of ATP, only oligopeptides shorter than five residues are hydrolyzed (such as succinyl-Leu-Tyr-|-NHMec, and Leu-Tyr-Leu-|-Tyr-Trp, in which cleavage of the -Tyr-|-Leu- and -Tyr-|-Trp bonds also occurs).. Functionally, cleaves peptides in various proteins in a process that requires ATP hydrolysis. Has a chymotrypsin-like activity. Plays a major role in the degradation of misfolded proteins. This is ATP-dependent Clp protease proteolytic subunit 1 from Synechococcus sp. (strain JA-2-3B'a(2-13)) (Cyanobacteria bacterium Yellowstone B-Prime).